The chain runs to 367 residues: Alanine racemase (367 aa).

Lysine 35 functions as the Proton acceptor; specific for D-alanine in the catalytic mechanism. Lysine 35 carries the post-translational modification N6-(pyridoxal phosphate)lysine. Position 130 (arginine 130) interacts with substrate. Residue tyrosine 258 is the Proton acceptor; specific for L-alanine of the active site. Methionine 306 is a substrate binding site.

It belongs to the alanine racemase family. The cofactor is pyridoxal 5'-phosphate.

The enzyme catalyses L-alanine = D-alanine. It participates in amino-acid biosynthesis; D-alanine biosynthesis; D-alanine from L-alanine: step 1/1. Its function is as follows. Catalyzes the interconversion of L-alanine and D-alanine. May also act on other amino acids. The chain is Alanine racemase (alr) from Acinetobacter baumannii (strain SDF).